Consider the following 366-residue polypeptide: Beta sliding clamp (366 aa).

Belongs to the beta sliding clamp family. As to quaternary structure, forms a ring-shaped head-to-tail homodimer around DNA which binds and tethers DNA polymerases and other proteins to the DNA. The DNA replisome complex has a single clamp-loading complex (3 tau and 1 each of delta, delta', psi and chi subunits) which binds 3 Pol III cores (1 core on the leading strand and 2 on the lagging strand) each with a beta sliding clamp dimer. Additional proteins in the replisome are other copies of gamma, psi and chi, Ssb, DNA helicase and RNA primase.

The protein resides in the cytoplasm. Functionally, confers DNA tethering and processivity to DNA polymerases and other proteins. Acts as a clamp, forming a ring around DNA (a reaction catalyzed by the clamp-loading complex) which diffuses in an ATP-independent manner freely and bidirectionally along dsDNA. Initially characterized for its ability to contact the catalytic subunit of DNA polymerase III (Pol III), a complex, multichain enzyme responsible for most of the replicative synthesis in bacteria; Pol III exhibits 3'-5' exonuclease proofreading activity. The beta chain is required for initiation of replication as well as for processivity of DNA replication. This Haemophilus influenzae (strain ATCC 51907 / DSM 11121 / KW20 / Rd) protein is Beta sliding clamp (dnaN).